Reading from the N-terminus, the 187-residue chain is Oligoribonuclease (187 aa).

An Exonuclease domain is found at 7-170; that stretch reads LIWIDLEMTG…DDIKDSINEL (164 aa). Tyr-128 is a catalytic residue.

It belongs to the oligoribonuclease family.

The protein localises to the cytoplasm. In terms of biological role, 3'-to-5' exoribonuclease specific for small oligoribonucleotides. This chain is Oligoribonuclease, found in Legionella pneumophila (strain Paris).